The sequence spans 971 residues: Exportin-2 (971 aa).

The 74-residue stretch at 29–102 (AEKFLESVEG…KANIVNLMLS (74 aa)) folds into the Importin N-terminal domain.

The protein belongs to the XPO2/CSE1 family. Interacts with cftr.

Its subcellular location is the cytoplasm. The protein localises to the nucleus. In terms of biological role, export receptor for importin alpha. Mediates importin-alpha re-export from the nucleus to the cytoplasm after import substrates have been released into the nucleoplasm. Negatively regulates fluid secretion and plays a role in fluid homeostasis by down-regulating cftr activity. This chain is Exportin-2 (cse1l), found in Pagrus major (Red sea bream).